A 335-amino-acid polypeptide reads, in one-letter code: 3-ketodihydrosphingosine reductase TSC10 (335 aa).

Positions 42, 44, 45, and 46 each coordinate NADPH. A GXSXG motif is present at residues 42–46 (GGSSG). Leu-47 contributes to the NADP(+) binding site. Residues Arg-67, Asp-68, Lys-71, Asp-95, and Leu-96 each contribute to the NADPH site. Asp-95 provides a ligand contact to NADP(+). NADP(+)-binding residues include Tyr-190, Lys-194, and Ile-223. Tyr-190 (proton acceptor) is an active-site residue. Lys-194 functions as the Lowers pKa of active site Tyr in the catalytic mechanism. Residues 288 to 308 (TNNFLLDTLWLIVSSVGVPIW) traverse the membrane as a helical segment.

This sequence belongs to the short-chain dehydrogenases/reductases (SDR) family.

It is found in the endoplasmic reticulum membrane. The catalysed reaction is sphinganine + NADP(+) = 3-oxosphinganine + NADPH + H(+). The protein operates within lipid metabolism; sphingolipid metabolism. Its function is as follows. Catalyzes the reduction of 3'-oxosphinganine (3-ketodihydrosphingosine/KDS) to sphinganine (dihydrosphingosine/DHS), the second step of de novo sphingolipid biosynthesis. The protein is 3-ketodihydrosphingosine reductase TSC10 (TSC10) of Cryptococcus neoformans var. neoformans serotype D (strain B-3501A) (Filobasidiella neoformans).